Here is a 196-residue protein sequence, read N- to C-terminus: Nodulation protein A (196 aa).

The protein belongs to the NodA family.

It is found in the cytoplasm. N-acyltransferase required for nodulation. Acts in the production of a small, heat-stable compound (Nod) that stimulates mitosis in various plant protoplasts. The protein is Nodulation protein A of Mesorhizobium sp. (strain 7653R).